The chain runs to 191 residues: MAAAQVKNEKIGNPKSNRRRRKKRRTEDFSSDSESSSSSSSDESMDDAAEEPKPIKETKSINIDDIDIDSDKETDVNSQEKQNSLRPEPLSNETHEKLSNIKLTTSKLTSVGGSSKNSNIDINQVKKTLAKDKDQLNNEYLMLMASSFSNDLDELRKKPDFTDKSLVLLAKTLQSGSNMFDEETLNAILEQ.

The interval 1 to 101 (MAAAQVKNEK…NETHEKLSNI (101 aa)) is disordered. The segment covering 32 to 42 (DSESSSSSSSD) has biased composition (low complexity). Residues 50–59 (EEPKPIKETK) show a composition bias toward basic and acidic residues. Positions 76-85 (VNSQEKQNSL) are enriched in polar residues.

The protein belongs to the RSA3 family. Associates with nucleolar pre-ribosomal particles.

The protein localises to the nucleus. Its subcellular location is the nucleolus. Functionally, required for efficient biogenesis of the 60S ribosomal subunit. The chain is Ribosome assembly protein 3 (RSA3) from Debaryomyces hansenii (strain ATCC 36239 / CBS 767 / BCRC 21394 / JCM 1990 / NBRC 0083 / IGC 2968) (Yeast).